The following is a 323-amino-acid chain: Beta-ketoacyl-[acyl-carrier-protein] synthase III (323 aa).

Active-site residues include Cys-112 and His-248. The interval 249–253 (QANRR) is ACP-binding. Asn-278 is an active-site residue.

Belongs to the thiolase-like superfamily. FabH family. As to quaternary structure, homodimer.

It is found in the cytoplasm. It catalyses the reaction malonyl-[ACP] + acetyl-CoA + H(+) = 3-oxobutanoyl-[ACP] + CO2 + CoA. It functions in the pathway lipid metabolism; fatty acid biosynthesis. In terms of biological role, catalyzes the condensation reaction of fatty acid synthesis by the addition to an acyl acceptor of two carbons from malonyl-ACP. Catalyzes the first condensation reaction which initiates fatty acid synthesis and may therefore play a role in governing the total rate of fatty acid production. Possesses both acetoacetyl-ACP synthase and acetyl transacylase activities. Its substrate specificity determines the biosynthesis of branched-chain and/or straight-chain of fatty acids. In Streptococcus agalactiae serotype Ia (strain ATCC 27591 / A909 / CDC SS700), this protein is Beta-ketoacyl-[acyl-carrier-protein] synthase III.